The following is a 250-amino-acid chain: N-acyl homoserine lactonase (250 aa).

Zn(2+) is bound by residues histidine 104, histidine 106, aspartate 108, histidine 109, histidine 169, aspartate 191, and histidine 235.

It belongs to the metallo-beta-lactamase superfamily. Monomer. Requires Zn(2+) as cofactor.

It carries out the reaction an N-acyl-L-homoserine lactone + H2O = an N-acyl-L-homoserine + H(+). Catalyzes hydrolysis of N-hexanoyl-(S)-homoserine lactone, but not the R-enantiomer. Hydrolyzes short- and long-chain N-acyl homoserine lactones with or without 3-oxo substitution at C3, has maximum activity on C10-AHL. The sequence is that of N-acyl homoserine lactonase from Bacillus thuringiensis subsp. indiana.